A 163-amino-acid polypeptide reads, in one-letter code: 3-isopropylmalate dehydratase small subunit (163 aa).

The protein belongs to the LeuD family. LeuD type 2 subfamily. In terms of assembly, heterodimer of LeuC and LeuD.

It catalyses the reaction (2R,3S)-3-isopropylmalate = (2S)-2-isopropylmalate. Its pathway is amino-acid biosynthesis; L-leucine biosynthesis; L-leucine from 3-methyl-2-oxobutanoate: step 2/4. Functionally, catalyzes the isomerization between 2-isopropylmalate and 3-isopropylmalate, via the formation of 2-isopropylmaleate. This chain is 3-isopropylmalate dehydratase small subunit, found in Ruminiclostridium cellulolyticum (strain ATCC 35319 / DSM 5812 / JCM 6584 / H10) (Clostridium cellulolyticum).